Consider the following 494-residue polypeptide: 3-octaprenyl-4-hydroxybenzoate carboxy-lyase (494 aa).

N172 contributes to the Mn(2+) binding site. Residues 175-177, 189-191, and 194-195 each bind prenylated FMN; these read IYR, RWL, and RG. E238 lines the Mn(2+) pocket. D294 functions as the Proton donor in the catalytic mechanism.

It belongs to the UbiD family. As to quaternary structure, homohexamer. Prenylated FMN is required as a cofactor. Mn(2+) serves as cofactor.

It is found in the cell membrane. It carries out the reaction a 4-hydroxy-3-(all-trans-polyprenyl)benzoate + H(+) = a 2-(all-trans-polyprenyl)phenol + CO2. It functions in the pathway cofactor biosynthesis; ubiquinone biosynthesis. Catalyzes the decarboxylation of 3-octaprenyl-4-hydroxy benzoate to 2-octaprenylphenol, an intermediate step in ubiquinone biosynthesis. The chain is 3-octaprenyl-4-hydroxybenzoate carboxy-lyase from Herminiimonas arsenicoxydans.